The primary structure comprises 308 residues: 1D-myo-inositol 2-acetamido-2-deoxy-alpha-D-glucopyranoside deacetylase (308 aa).

Positions 18, 21, and 153 each coordinate Zn(2+).

This sequence belongs to the MshB deacetylase family. Requires Zn(2+) as cofactor.

The catalysed reaction is 1D-myo-inositol 2-acetamido-2-deoxy-alpha-D-glucopyranoside + H2O = 1D-myo-inositol 2-amino-2-deoxy-alpha-D-glucopyranoside + acetate. Catalyzes the deacetylation of 1D-myo-inositol 2-acetamido-2-deoxy-alpha-D-glucopyranoside (GlcNAc-Ins) in the mycothiol biosynthesis pathway. The protein is 1D-myo-inositol 2-acetamido-2-deoxy-alpha-D-glucopyranoside deacetylase of Salinispora arenicola (strain CNS-205).